The sequence spans 332 residues: Glyceraldehyde-3-phosphate dehydrogenase (332 aa).

Residues 11 to 12, aspartate 34, arginine 78, and serine 120 contribute to the NAD(+) site; that span reads RI. D-glyceraldehyde 3-phosphate is bound by residues 151-153, threonine 182, arginine 197, 210-211, and arginine 233; these read SCT and TG. Catalysis depends on cysteine 152, which acts as the Nucleophile. NAD(+) is bound at residue asparagine 314.

Belongs to the glyceraldehyde-3-phosphate dehydrogenase family. Homotetramer.

The protein localises to the cytoplasm. It catalyses the reaction D-glyceraldehyde 3-phosphate + phosphate + NAD(+) = (2R)-3-phospho-glyceroyl phosphate + NADH + H(+). It participates in carbohydrate degradation; glycolysis; pyruvate from D-glyceraldehyde 3-phosphate: step 1/5. Catalyzes the oxidative phosphorylation of glyceraldehyde 3-phosphate (G3P) to 1,3-bisphosphoglycerate (BPG) using the cofactor NAD. The first reaction step involves the formation of a hemiacetal intermediate between G3P and a cysteine residue, and this hemiacetal intermediate is then oxidized to a thioester, with concomitant reduction of NAD to NADH. The reduced NADH is then exchanged with the second NAD, and the thioester is attacked by a nucleophilic inorganic phosphate to produce BPG. The polypeptide is Glyceraldehyde-3-phosphate dehydrogenase (gap) (Kitasatospora aureofaciens (Streptomyces aureofaciens)).